The primary structure comprises 181 residues: Protein GrpE (181 aa).

The protein belongs to the GrpE family. As to quaternary structure, homodimer.

Its subcellular location is the cytoplasm. In terms of biological role, participates actively in the response to hyperosmotic and heat shock by preventing the aggregation of stress-denatured proteins, in association with DnaK and GrpE. It is the nucleotide exchange factor for DnaK and may function as a thermosensor. Unfolded proteins bind initially to DnaJ; upon interaction with the DnaJ-bound protein, DnaK hydrolyzes its bound ATP, resulting in the formation of a stable complex. GrpE releases ADP from DnaK; ATP binding to DnaK triggers the release of the substrate protein, thus completing the reaction cycle. Several rounds of ATP-dependent interactions between DnaJ, DnaK and GrpE are required for fully efficient folding. The protein is Protein GrpE of Delftia acidovorans (strain DSM 14801 / SPH-1).